The primary structure comprises 199 residues: Pre T-cell antigen receptor alpha (199 aa).

An N-terminal signal peptide occupies residues 1 to 16; sequence MARTWLLLFLGLRCQA. Residues 17–155 are Extracellular-facing; the sequence is LPSGIAGTPF…RQVLRLSVLR (139 aa). The cysteines at positions 47 and 107 are disulfide-linked. 2 N-linked (GlcNAc...) asparagine glycosylation sites follow: asparagine 67 and asparagine 117. The tract at residues 117–139 is disordered; it reads NRSTHPLQLSGEEASTDRTCPQE. A helical transmembrane segment spans residues 156–176; the sequence is LLLFKLLLLDVFLTCSRLCVL. At 177-199 the chain is on the cytoplasmic side; sequence AGQHLLPPPSSKQAPASTHQSWT.

In terms of assembly, heterodimer with TCRB; disulfide linked. This heterodimer assembles with CD3 proteins into a signaling-competent pre-T-cell receptor complex. Interacts with RHBDD1. Found in CD45+ but not in the CD45- fetal liver cells.

The protein resides in the membrane. It localises to the cell membrane. Component of the pre-T-cell receptor complex (composed of PTCRA, TCRB and the CD3 complex) that has a crucial role in early T-cell development, particularly alpha-beta T cell differentiation. The sequence is that of Pre T-cell antigen receptor alpha from Rattus norvegicus (Rat).